We begin with the raw amino-acid sequence, 387 residues long: Putative ankyrin repeat protein RBE_0984 (387 aa).

5 ANK repeats span residues 50–79, 88–119, 123–154, 159–188, and 210–239; these read YGNT…DKDI, HRET…AINV, RKHT…VINV, HKDS…KENI, and VCKM…LKGE. 2 coiled-coil regions span residues 251–278 and 311–352; these read FEDI…KKCE and SISA…ALEK.

The polypeptide is Putative ankyrin repeat protein RBE_0984 (Rickettsia bellii (strain RML369-C)).